A 796-amino-acid polypeptide reads, in one-letter code: Protein translocase subunit SecA 2 (796 aa).

ATP contacts are provided by residues glutamine 84, 102 to 106 (GEGKT), and aspartate 496.

This sequence belongs to the SecA family. In terms of assembly, monomer and homodimer. Part of the essential Sec protein translocation apparatus which comprises SecA, SecYEG and auxiliary proteins SecDF. Other proteins may also be involved.

It localises to the cell membrane. The protein resides in the cytoplasm. It catalyses the reaction ATP + H2O + cellular proteinSide 1 = ADP + phosphate + cellular proteinSide 2.. Functionally, part of the Sec protein translocase complex. Interacts with the SecYEG preprotein conducting channel. Has a central role in coupling the hydrolysis of ATP to the transfer of proteins into and across the cell membrane, serving as an ATP-driven molecular motor driving the stepwise translocation of polypeptide chains across the membrane. In Staphylococcus epidermidis (strain ATCC 35984 / DSM 28319 / BCRC 17069 / CCUG 31568 / BM 3577 / RP62A), this protein is Protein translocase subunit SecA 2.